Reading from the N-terminus, the 494-residue chain is Protein DETOXIFICATION 23 (494 aa).

The segment at 1–25 (MARREGEVTETLLKKSTENRGEDRD) is disordered. Transmembrane regions (helical) follow at residues 40-60 (LWVVAGPAIFTRFSTSGLSLI), 74-94 (AAYSITLTVLLRFSNGILLGM), 123-143 (IVLTGCTICLMPIYIFAGPIL), 158-178 (IIALWVIGINISFVPSFTCQM), 188-208 (IIAYVAAVSLGVHVFLSWLLV), 223-243 (LVAHWLPNIAQVLFVTCGGCT), 268-288 (GGMICLELWYNSILILLTGNL), 297-317 (ALAICININALEMMVAFGFMA), 340-360 (MVVVSTSLSIGIIFFFIFLFL), 384-404 (LLAFSILLNSIQPVLSGVAVG), 416-436 (LACYYLVGIPSGLFLGYVVGL), and 441-461 (VWLGMIFGIFVQTCVLTVMTM).

It belongs to the multi antimicrobial extrusion (MATE) (TC 2.A.66.1) family.

The protein localises to the membrane. This is Protein DETOXIFICATION 23 from Arabidopsis thaliana (Mouse-ear cress).